The sequence spans 113 residues: Protein translation factor SUI1 homolog (113 aa).

Residues 1–24 (MSELDSQVPTAFDPFADANAEDSG) form a disordered region. N-acetylserine is present on Ser-2.

Belongs to the SUI1 family.

Its function is as follows. Probably involved in translation. In Brassica oleracea (Wild cabbage), this protein is Protein translation factor SUI1 homolog.